Here is a 5161-residue protein sequence, read N- to C-terminus: Nonribosomal peptide synthetase TES (5161 aa).

The adenylation 1 stretch occupies residues 37–436 (EEQAIARPNA…GRKDSQTKVR (400 aa)). The Carrier 1 domain occupies 569–645 (QPETEKEQIL…KLTSAAIPSV (77 aa)). At Ser-606 the chain carries O-(pantetheine 4'-phosphoryl)serine. The condensation 1 stretch occupies residues 659–1098 (GHVAQSFAQG…LLCDVELSKL (440 aa)). An adenylation 2 region spans residues 1122 to 1522 (RQQTSLCPSR…GRMDGQVKIR (401 aa)). The segment at 1630–1742 (MNEWLDDTID…YLFKTTQQLL (113 aa)) is methyltransferase (M) domain 1. Positions 2068–2141 (TRAESKIQQL…QLAAVAQEHV (74 aa)) constitute a Carrier 2 domain. Ser-2102 carries the O-(pantetheine 4'-phosphoryl)serine modification. A condensation 2 region spans residues 2179-2593 (EDIYPCSPLQ…MLTQDDEQQL (415 aa)). The segment at 2614-3010 (DQAKSRPEAD…GRKDGQVKVR (397 aa)) is adenylation 3. In terms of domain architecture, Carrier 3 spans 3139–3215 (KPETKHEMAL…RLANRLVDPP (77 aa)). O-(pantetheine 4'-phosphoryl)serine is present on Ser-3176. Residues 3232-3668 (LQSFAQGRLW…VVPLMTVEAH (437 aa)) form a condensation 3 region. An adenylation 4 region spans residues 3694 to 4098 (FRQQAAMQPS…GRIDGQVKIR (405 aa)). The segment at 4203–4329 (EMKEWLEETI…KVDGVKTLFF (127 aa)) is methyltransferase (M) domain 2. In terms of domain architecture, Carrier 4 spans 4643–4725 (RELSTAELKV…QFSQHEGEQK (83 aa)). At Ser-4680 the chain carries O-(pantetheine 4'-phosphoryl)serine. A condensation 4 region spans residues 4785–5093 (FFLNLGTRVD…HQNLNEHPEF (309 aa)).

The protein belongs to the NRP synthetase family.

The protein operates within phytotoxin biosynthesis. Functionally, nonribosomal peptide synthetase; part of the gene cluster that mediates the biosynthesis of the phytotoxin tentoxin, an inhibitor the F1-ATPase activity of chloroplasts, resulting in chlorosis in sensitive plants. Tentoxin is a cyclic tetrapeptide that consists of four amino acid residues: glycine (Gly), alanine (Ala), leucine (Leu), and dehydrophenylalanine (DPhe). In addition, both the Ala and DPhe residues are N-methylated. The nonribosomal peptide synthetase TES assembles tentoxin from the four substrate amino acids. The adenylation domains of each of the 4 modules are responsible for the activation of Gly, Ala, Leu and DPhe, respectively. In addition, the N-methyltransferase domains in the second and fourth modules of TES could be responsible for N-methylation of Ala and DPhe residues. Finally, the condensation domain located in the termination module probably catalyzes the formation of the intramolecular macrocyclization and then the release of tentoxin. The cytochrome P450 monooxygenase TES1 is predicted to be involved in the formation of DPhe. The polypeptide is Nonribosomal peptide synthetase TES (Alternaria alternata (Alternaria rot fungus)).